A 387-amino-acid chain; its full sequence is 3-ketoacyl-CoA thiolase (387 aa).

The active-site Acyl-thioester intermediate is cysteine 91. Catalysis depends on proton acceptor residues histidine 343 and cysteine 373.

Belongs to the thiolase-like superfamily. Thiolase family. In terms of assembly, heterotetramer of two alpha chains (FadB) and two beta chains (FadA).

The protein resides in the cytoplasm. It carries out the reaction an acyl-CoA + acetyl-CoA = a 3-oxoacyl-CoA + CoA. The protein operates within lipid metabolism; fatty acid beta-oxidation. Functionally, catalyzes the final step of fatty acid oxidation in which acetyl-CoA is released and the CoA ester of a fatty acid two carbons shorter is formed. The chain is 3-ketoacyl-CoA thiolase from Escherichia coli O6:K15:H31 (strain 536 / UPEC).